The sequence spans 533 residues: Lanosterol 14-alpha demethylase (533 aa).

C472 contributes to the heme binding site.

This sequence belongs to the cytochrome P450 family. It depends on heme as a cofactor.

The protein resides in the membrane. The enzyme catalyses a 14alpha-methyl steroid + 3 reduced [NADPH--hemoprotein reductase] + 3 O2 = a Delta(14) steroid + formate + 3 oxidized [NADPH--hemoprotein reductase] + 4 H2O + 4 H(+). The catalysed reaction is a 14alpha-methyl steroid + reduced [NADPH--hemoprotein reductase] + O2 = a 14alpha-hydroxymethyl steroid + oxidized [NADPH--hemoprotein reductase] + H2O + H(+). It carries out the reaction a 14alpha-hydroxymethyl steroid + reduced [NADPH--hemoprotein reductase] + O2 = a 14alpha-formyl steroid + oxidized [NADPH--hemoprotein reductase] + 2 H2O + H(+). It catalyses the reaction a 14alpha-formyl steroid + reduced [NADPH--hemoprotein reductase] + O2 = a Delta(14) steroid + formate + oxidized [NADPH--hemoprotein reductase] + H2O + 2 H(+). The enzyme catalyses lanosterol + 3 reduced [NADPH--hemoprotein reductase] + 3 O2 = 4,4-dimethyl-5alpha-cholesta-8,14,24-trien-3beta-ol + formate + 3 oxidized [NADPH--hemoprotein reductase] + 4 H2O + 4 H(+). The catalysed reaction is lanosterol + reduced [NADPH--hemoprotein reductase] + O2 = 32-hydroxylanosterol + oxidized [NADPH--hemoprotein reductase] + H2O + H(+). It carries out the reaction 32-hydroxylanosterol + reduced [NADPH--hemoprotein reductase] + O2 = 32-oxolanosterol + oxidized [NADPH--hemoprotein reductase] + 2 H2O + H(+). It catalyses the reaction 32-oxolanosterol + reduced [NADPH--hemoprotein reductase] + O2 = 4,4-dimethyl-5alpha-cholesta-8,14,24-trien-3beta-ol + formate + oxidized [NADPH--hemoprotein reductase] + H2O + 2 H(+). The enzyme catalyses eburicol + 3 reduced [NADPH--hemoprotein reductase] + 3 O2 = 14-demethyleburicol + formate + 3 oxidized [NADPH--hemoprotein reductase] + 4 H2O + 4 H(+). The catalysed reaction is eburicol + reduced [NADPH--hemoprotein reductase] + O2 = 32-hydroxyeburicol + oxidized [NADPH--hemoprotein reductase] + H2O + H(+). It carries out the reaction 32-hydroxyeburicol + reduced [NADPH--hemoprotein reductase] + O2 = 32-oxoeburicol + oxidized [NADPH--hemoprotein reductase] + 2 H2O + H(+). It catalyses the reaction 32-oxoeburicol + reduced [NADPH--hemoprotein reductase] + O2 = 14-demethyleburicol + formate + oxidized [NADPH--hemoprotein reductase] + H2O + 2 H(+). It participates in steroid biosynthesis; zymosterol biosynthesis; zymosterol from lanosterol: step 1/6. Its function is as follows. Sterol 14alpha-demethylase that plays a critical role in the third module of ergosterol biosynthesis pathway, being ergosterol the major sterol component in fungal membranes that participates in a variety of functions. The third module or late pathway involves the ergosterol synthesis itself through consecutive reactions that mainly occur in the endoplasmic reticulum (ER) membrane. In filamentous fungi, during the initial step of this module, lanosterol (lanosta-8,24-dien-3beta-ol) can be metabolized to eburicol. Sterol 14alpha-demethylase catalyzes the three-step oxidative removal of the 14alpha-methyl group (C-32) of both these sterols in the form of formate, and converts eburicol and lanosterol to 14-demethyleburicol (4,4,24-trimethylergosta-8,14,24(28)-trienol) and 4,4-dimethyl-5alpha-cholesta-8,14,24-trien-3beta-ol, respectively, which are further metabolized by other enzymes in the pathway to ergosterol. Can also use substrates not intrinsic to fungi, such as 24,25-dihydrolanosterol (DHL), producing 4,4-dimethyl-8,14-cholestadien-3-beta-ol, but at lower rates than the endogenous substrates. This is Lanosterol 14-alpha demethylase (ERG11) from Candida glabrata (strain ATCC 2001 / BCRC 20586 / JCM 3761 / NBRC 0622 / NRRL Y-65 / CBS 138) (Yeast).